Consider the following 405-residue polypeptide: Zinc finger protein ubi-d4 (405 aa).

Disordered regions lie at residues 80-147 (RKKR…GEFP), 165-194 (DDLD…GGAR), 210-230 (ACDN…VCGK), and 248-280 (AEEE…PDGL). Composition is skewed to basic and acidic residues over residues 100 to 110 (PDTDQTLKKEG) and 126 to 140 (DPLE…RMDD). A compositionally biased stretch (acidic residues) spans 165 to 174 (DDLDDEDYEE). Residues 209–246 (YACDNSYKQKHSLKPPDRVCGKRYKNRPGLSYHYAHSH) form a C2H2-type; atypical zinc finger. The span at 267–277 (RSEEQKSKKGP) shows a compositional bias: basic and acidic residues. PHD-type zinc fingers lie at residues 284–344 (NNYC…CKCC) and 341–391 (CKCC…CLDL).

This sequence belongs to the requiem/DPF family.

The protein resides in the cytoplasm. It localises to the nucleus. In terms of biological role, may be a transcription factor required for the apoptosis response following survival factor withdrawal from myeloid cells. Might also have a role in the development and maturation of lymphoid cells. The sequence is that of Zinc finger protein ubi-d4 (REQ) from Gallus gallus (Chicken).